A 591-amino-acid chain; its full sequence is Uncoordinated protein 58 (591 aa).

The tract at residues 1-24 is disordered; the sequence is MFFYSPNVAPQPSSTSHRRPTLTH. The chain crosses the membrane as a helical span at residues 184-204; the sequence is VILVSVLIGYLCLGAWILMLL. Asn226 is a glycosylation site (N-linked (GlcNAc...) asparagine). The next 5 membrane-spanning stretches (helical) occupy residues 289–309, 318–338, 400–420, 428–448, and 453–473; these read TFPT…YGEV, VFSV…AADI, PIGA…AMFI, FIHA…GDIV, and IFLS…TMCV.

Belongs to the two pore domain potassium channel (TC 1.A.1.8) family.

Its subcellular location is the membrane. Functionally, has a role in mobility, possibly in the transport of potassium in muscles. In Caenorhabditis elegans, this protein is Uncoordinated protein 58.